The following is a 171-amino-acid chain: Bursicon (171 aa).

Residues 1–31 form the signal peptide; the sequence is MISSPSTPATFAAGSLVLLCLVLGGGHFALA. 5 disulfides stabilise this stretch: C47–C96, C61–C110, C71–C131, C75–C133, and C93–C136. In terms of domain architecture, CTCK spans 47–137; it reads CQVTPVIHVL…PLECMCRPCT (91 aa).

Heterodimer of burs and pburs.

It is found in the secreted. Final heterodimeric neurohormone released at the end of the molting cycle, involved in the sclerotization (tanning) of the insect cuticle, melanization and wing spreading. In Culex pipiens pipiens (Northern house mosquito), this protein is Bursicon.